Here is a 210-residue protein sequence, read N- to C-terminus: Transcriptional regulator MxiE (210 aa).

In terms of domain architecture, HTH araC/xylS-type spans 99-199; the sequence is YHLVLYLLRT…GFSARELSNI (101 aa). 2 DNA-binding regions (H-T-H motif) span residues 118-139 and 166-189; these read KSLT…RKAL and ITSA…KTRL.

Necessary for the secretion of ipa invasins. Probable transcriptional regulatory protein. This is Transcriptional regulator MxiE (mxiE) from Shigella flexneri.